The sequence spans 650 residues: Acetyl-coenzyme A synthetase (650 aa).

CoA contacts are provided by residues 189 to 192 (RGGK), threonine 307, and asparagine 331. ATP contacts are provided by residues 383–385 (GEP), 407–412 (DTWWQT), aspartate 496, and arginine 511. Serine 519 is a CoA binding site. Arginine 522 is an ATP binding site. Mg(2+) contacts are provided by valine 533, histidine 535, and valine 538. Arginine 580 is a binding site for CoA. Lysine 605 carries the post-translational modification N6-acetyllysine.

Belongs to the ATP-dependent AMP-binding enzyme family. Requires Mg(2+) as cofactor. Post-translationally, acetylated. Deacetylation by the SIR2-homolog deacetylase activates the enzyme.

The enzyme catalyses acetate + ATP + CoA = acetyl-CoA + AMP + diphosphate. Catalyzes the conversion of acetate into acetyl-CoA (AcCoA), an essential intermediate at the junction of anabolic and catabolic pathways. AcsA undergoes a two-step reaction. In the first half reaction, AcsA combines acetate with ATP to form acetyl-adenylate (AcAMP) intermediate. In the second half reaction, it can then transfer the acetyl group from AcAMP to the sulfhydryl group of CoA, forming the product AcCoA. The chain is Acetyl-coenzyme A synthetase from Syntrophobacter fumaroxidans (strain DSM 10017 / MPOB).